A 60-amino-acid polypeptide reads, in one-letter code: Mastoparan-VT3 (60 aa).

The N-terminal stretch at methionine 1–alanine 27 is a signal peptide. AXPX repeat units follow at residues alanine 27–lysine 30, alanine 31–leucine 34, alanine 35–asparagine 38, and alanine 41–glutamate 44. A propeptide spanning residues aspartate 28–alanine 45 is cleaved from the precursor. Leucine 59 is subject to Leucine amide.

The protein belongs to the MCD family. Mastoparan subfamily. In terms of tissue distribution, expressed by the venom gland.

It localises to the secreted. Its function is as follows. The synthetic peptide shows antimicrobial activities against Gram-negative bacteria (but not against all strains tested), Gram-positive bacteria (all strains tested) and the fungi C.albicans and C.parapsilosis. Exhibits moderate hemolytic activity (25% at 100 ug/ml) against washed human erythrocytes. The protein is Mastoparan-VT3 of Vespa tropica (Greater banded hornet).